A 590-amino-acid chain; its full sequence is PWWP domain-containing protein 2B (590 aa).

Disordered regions lie at residues Ala-52–Pro-110, Lys-182–Pro-347, Tyr-360–Pro-398, and Asp-426–Pro-467. Ser-84 bears the Phosphoserine mark. Residues Pro-99–Pro-110 are compositionally biased toward pro residues. Phosphoserine is present on residues Ser-186 and Ser-206. A compositionally biased stretch (basic and acidic residues) spans Pro-208–Glu-217. Residue Ser-250 is modified to Phosphoserine. Basic and acidic residues predominate over residues Val-296–Pro-305. The segment covering Gly-376–Ser-385 has biased composition (low complexity). Ser-447 is subject to Phosphoserine. Residues Val-490–Phe-550 form the PWWP domain.

As to quaternary structure, component of a MTA1-specific subcomplex of the NuRD complex composed of PWWP2B, MTA1 and HDAC1 but does not contain CHD4 and MBD3. Interacts with MTA1 and HDAC1. Interacts with MTA2, MTA3, HDAC2, RBBP4, RBBP7, BRCC3 and ZNF516. Does not interact with CHD4 and MBD3. Deubiquitinated by BRCC3; leading to its stabilization.

Functionally, chromatin-binding protein that acts as an adapter between distinct nucleosome components (H3K36me3 or H2A.Z) and chromatin-modifying complexes, contributing to the regulation of the levels of histone acetylation at actively transcribed genes. Competes with CHD4 and MBD3 for interaction with MTA1 to form a NuRD subcomplex, preventing the formation of full NuRD complex (containing CHD4 and MBD3), leading to recruitment of HDACs to gene promoters resulting in turn in the deacetylation of nearby H3K27 and H2A.Z. Plays a role in facilitating transcriptional elongation through regulation of histone acetylation. Negatively regulates brown adipocyte thermogenesis by interacting with and stabilizing HDAC1 at the UCP1 gene promoter, thereby promoting histone deacetylation at the promoter leading to the repression of UCP1 expression. In Homo sapiens (Human), this protein is PWWP domain-containing protein 2B (PWWP2B).